The primary structure comprises 98 residues: DNA-binding protein Fis (98 aa).

A DNA-binding region (H-T-H motif) is located at residues 74–93 (QTRAATMLGINRGTLRKKLK).

Belongs to the transcriptional regulatory Fis family. In terms of assembly, homodimer.

Activates ribosomal RNA transcription. Plays a direct role in upstream activation of rRNA promoters. This Histophilus somni (strain 2336) (Haemophilus somnus) protein is DNA-binding protein Fis.